Here is a 156-residue protein sequence, read N- to C-terminus: MMKKTKVIVLAENALTTPGKLVRYINTLNQPVIVKETCFGAYIEGEEELVDKLAQEIRNYERNRIFCKDRGYAIWDKRRCRAFRGGGPREGFHQLEAEQAVLDKIGLALDKIDKEGIKPMEEVLAKENELIKRETKIPVEEFKNIIEKVLGSKNEA.

This is an uncharacterized protein from Methanocaldococcus jannaschii (strain ATCC 43067 / DSM 2661 / JAL-1 / JCM 10045 / NBRC 100440) (Methanococcus jannaschii).